The following is a 520-amino-acid chain: Ribonuclease Y 2 (520 aa).

A helical transmembrane segment spans residues 7-23; that stretch reads VVLLLASIGVGYGLRAK. The region spanning 206-269 is the KH domain; that stretch reads NHRSFIAENA…AVAMETMEMI (64 aa). The region spanning 332–425 is the HD domain; the sequence is ILEHSIETAK…VEAADAISGA (94 aa).

This sequence belongs to the RNase Y family.

Its subcellular location is the cell membrane. Its function is as follows. Endoribonuclease that initiates mRNA decay. The chain is Ribonuclease Y 2 from Pediococcus pentosaceus (strain ATCC 25745 / CCUG 21536 / LMG 10740 / 183-1w).